Consider the following 396-residue polypeptide: Alanine racemase (396 aa).

The active-site Proton acceptor; specific for D-alanine is lysine 46. N6-(pyridoxal phosphate)lysine is present on lysine 46. Arginine 145 lines the substrate pocket. Residue tyrosine 280 is the Proton acceptor; specific for L-alanine of the active site. Methionine 328 contacts substrate.

The protein belongs to the alanine racemase family. Pyridoxal 5'-phosphate serves as cofactor.

The catalysed reaction is L-alanine = D-alanine. It participates in amino-acid biosynthesis; D-alanine biosynthesis; D-alanine from L-alanine: step 1/1. Functionally, catalyzes the interconversion of L-alanine and D-alanine. May also act on other amino acids. In Brucella abortus (strain 2308), this protein is Alanine racemase (alr).